A 277-amino-acid polypeptide reads, in one-letter code: ATP-dependent Clp protease proteolytic subunit, mitochondrial (277 aa).

The N-terminal 56 residues, 1-56 (MWPGILVGGARVASCRYPALGPRLAAHFPAQRPPQRTLQNGLALQRCLHATATRAL), are a transit peptide targeting the mitochondrion. Ser-153 (nucleophile) is an active-site residue. His-178 is an active-site residue. Position 200 is an N6-succinyllysine (Lys-200). Residue Lys-211 is modified to N6-acetyllysine. Residues 246-277 (VHPPQDGEDEPTLVQKEPVEAAPAAEPVPAST) form a disordered region. Low complexity predominate over residues 265–277 (EAAPAAEPVPAST).

It belongs to the peptidase S14 family. As to quaternary structure, fourteen CLPP subunits assemble into 2 heptameric rings which stack back to back to give a disk-like structure with a central cavity. Component of the ClpXP complex formed by the assembly of two CLPP heptameric rings with two CLPX hexameric rings, giving rise to a symmetrical structure with two central CLPP rings flanked by a CLPX ring at either end of the complex. In terms of tissue distribution, detected in liver (at protein level). Predominantly expressed in skeletal muscle. Intermediate levels in heart, liver and pancreas. Low in brain, placenta, lung and kidney.

The protein resides in the mitochondrion matrix. The catalysed reaction is Hydrolysis of proteins to small peptides in the presence of ATP and magnesium. alpha-casein is the usual test substrate. In the absence of ATP, only oligopeptides shorter than five residues are hydrolyzed (such as succinyl-Leu-Tyr-|-NHMec, and Leu-Tyr-Leu-|-Tyr-Trp, in which cleavage of the -Tyr-|-Leu- and -Tyr-|-Trp bonds also occurs).. Its function is as follows. Protease component of the ClpXP complex that cleaves peptides and various proteins in an ATP-dependent process. Has low peptidase activity in the absence of CLPX. The ClpXP complex can degrade CSN1S1, CSN2 and CSN3, as well as synthetic peptides (in vitro) and may be responsible for a fairly general and central housekeeping function rather than for the degradation of specific substrates. Cleaves PINK1 in the mitochondrion. This chain is ATP-dependent Clp protease proteolytic subunit, mitochondrial, found in Homo sapiens (Human).